The primary structure comprises 322 residues: Serine protease Lpg1137 (322 aa).

Residue Ser68 is part of the active site.

It is found in the secreted. Its subcellular location is the host mitochondrion membrane. Functionally, serine protease effector that inhibits host cell autophagy by targeting SNX17. Localizes to the host endoplasmic reticulum-mitochondria contact site and catalyzes degradation of host SNX17, thereby impairing endoplasmic reticulum-mitochondria communication, leading to inhibit autophagy as well as staurosporine-induced apoptosis. The sequence is that of Serine protease Lpg1137 from Legionella pneumophila subsp. pneumophila (strain Philadelphia 1 / ATCC 33152 / DSM 7513).